We begin with the raw amino-acid sequence, 320 residues long: Epoxidase atD (320 aa).

Residues asparagine 245 and asparagine 299 are each glycosylated (N-linked (GlcNAc...) asparagine).

Its pathway is secondary metabolite biosynthesis. In terms of biological role, epoxidase; part of the gene cluster that mediates the biosynthesis of terreic acid, a quinone epoxide inhibitor of Bruton's tyrosine kinase. The first step of the pathway is the synthesis of 6-methylsalicylic acid (6-MSA) by the 6-methylsalicylic acid synthase atX. In the biosynthesis of 6-MSA, atX utilizes one acetyl-CoA and three malonyl-CoAs as its substrates and catalyzes a series of programmed reactions including Claisen condensation, reduction, aldol cyclization, and the hydrolytic cleavage that yields 6-MSA. The 6-methylsalicylate 1-monooxygenase atA then catalyzes the decarboxylative hydroxylation of 6-MSA to 3-methylcatechol. The next step is the conversion of 3-methylcatechol to 3-methyl-1,2,4-benzenetriol by cytochrome P450 monooxygenase atE, which is enhanced by cytochrome P450 monooxygenase atG. Then, the epoxidase atD catalyzes the epoxidation and hydroxyl oxidation of 3-methyl-1,2,4-benzenetriol to terremutin. Lastly, GMC oxidoreductase atC oxidizes terremutin to terreic acid. This is Epoxidase atD from Aspergillus terreus (strain NIH 2624 / FGSC A1156).